Here is a 1048-residue protein sequence, read N- to C-terminus: [F-actin]-monooxygenase MICAL1 (1048 aa).

Residues 1–489 form a monooxygenase domain region; the sequence is MASPASTNPA…QDLYDMMDKE (489 aa). FAD is bound by residues Cys95, 114 to 116, 121 to 123, Phe181, Tyr293, and Asp393; these read EKR and RHN. Thr475 is modified (phosphothreonine). Positions 488 to 502 are enriched in basic and acidic residues; the sequence is KEHAQRKSDEPDSRK. Residues 488-508 form a disordered region; it reads KEHAQRKSDEPDSRKTTTGSA. One can recognise a Calponin-homology (CH) domain in the interval 507–611; that stretch reads SAGTEELLHW…YLSHFHSAFK (105 aa). Ser616 is subject to Phosphoserine. The tract at residues 643–676 is disordered; sequence TRAKVDEETPSTEEPPVSEPSMSPNTPELSEHQE. A compositionally biased stretch (low complexity) spans 654–666; that stretch reads TEEPPVSEPSMSP. The LIM zinc-binding domain maps to 681 to 743; it reads ELCELCGKHL…LQHLPQEDQK (63 aa). Residues Cys683, Cys686, His704, Cys707, Cys710, Cys713, Cys733, and His736 each contribute to the Zn(2+) site. Disordered regions lie at residues 741–787, 805–825, and 839–873; these read DQKE…QPAR, IIPD…SDLA, and PVQA…PPLE. The segment covering 747-765 has biased composition (polar residues); the sequence is NNGSLESQELPTPGDSNMQ. Over residues 772–787 the composition is skewed to low complexity; the sequence is PVTRVSPVPSPSQPAR. A phosphoserine mark is found at Ser777 and Ser781. Coiled-coil stretches lie at residues 847 to 867, 906 to 949, and 974 to 1031; these read EAIE…EEEE, EEEM…ESSS, and EEAE…VNQR. Positions 852-868 are enriched in acidic residues; the sequence is GDDEEEEEEEEEEEEEP. A bMERB domain is found at 905-1048; that stretch reads KEEEMKRFCK…EERRLREMPA (144 aa).

The protein belongs to the Mical family. As to quaternary structure, associates with the SH3 domain of NEDD9. Interacts with VIM and PLXNA3. Interacts with RAB1B, RAB8A, RAB10, RAB13 and RAB15 (in their GTP-bound forms); binding to RAB1B is of low affinity compared to other Rab proteins; at least in case of RAB8A and RAB10 can bind 2 molecules of the Rab proteins simultaneously. Interacts with STK38 and STK38L. Interacts with GRAF1/ARHGAP26, GRAF2/ARHGAP10, RAB8A, RAB8B and RAB10; may bind simultaneously to GRAFs and Rabs and connects GRAFs to Rabs. Does not interact with RAB1 and RAB11A. The cofactor is FAD. In terms of tissue distribution, expressed in the postnatal and adult hippocampus; found in dentate gyrus, the polymorphic layer, cornu ammonis (CA) 1-3 and in mossy fibers of the striatum lucidum. In adult hippocampus strongly expressed in CA3 pyramidial neurons.

The protein localises to the cytoplasm. It localises to the cytoskeleton. Its subcellular location is the endosome membrane. It is found in the midbody. The enzyme catalyses L-methionyl-[F-actin] + NADPH + O2 + H(+) = L-methionyl-(R)-S-oxide-[F-actin] + NADP(+) + H2O. It catalyses the reaction NADPH + O2 + H(+) = H2O2 + NADP(+). Monooxygenase that promotes depolymerization of F-actin by mediating oxidation of specific methionine residues on actin to form methionine-sulfoxide, resulting in actin filament disassembly and preventing repolymerization. In the absence of actin, it also functions as a NADPH oxidase producing H(2)O(2). Acts as a cytoskeletal regulator that connects NEDD9 to intermediate filaments. Also acts as a negative regulator of apoptosis via its interaction with STK38 and STK38L; acts by antagonizing STK38 and STK38L activation by MST1/STK4. Involved in regulation of lamina-specific connectivity in the nervous system such as the development of lamina-restricted hippocampal connections. Through redox regulation of the actin cytoskeleton controls the intracellular distribution of secretory vesicles containing L1/neurofascin/NgCAM family proteins in neurons, thereby regulating their cell surface levels. May act as Rab effector protein and play a role in vesicle trafficking. Promotes endosomal tubule extension by associating with RAB8 (RAB8A or RAB8B), RAB10 and GRAF (GRAF1/ARHGAP26 or GRAF2/ARHGAP10) on the endosomal membrane which may connect GRAFs to Rabs, thereby participating in neosynthesized Rab8-Rab10-Rab11-dependent protein export. In Mus musculus (Mouse), this protein is [F-actin]-monooxygenase MICAL1 (Mical1).